The sequence spans 1050 residues: Nuclear pore complex-interacting protein family member B3 (1050 aa).

Residues 63–87 (VIIAFPTSYKVVITLWIVYLWVSLL) form a helical membrane-spanning segment. Disordered stretches follow at residues 241–262 (NRMG…NSLS), 290–574 (LTPL…NIKT), and 785–1050 (ERLR…RRLS). Polar residues predominate over residues 252–262 (QQHSITDNSLS). The span at 349–359 (PLPPSALPSAP) shows a compositional bias: pro residues. Composition is skewed to basic and acidic residues over residues 406–416 (DNIKTPAERLR), 448–458 (DNIKTPAERLR), 490–500 (DNIKTPAERLR), 528–538 (DNIKTPAERLR), 820–830 (DNIKTPAERLR), 862–872 (DNIKTPAERLR), and 904–914 (DNIKTPAERLR).

It belongs to the NPIP family.

It is found in the membrane. The chain is Nuclear pore complex-interacting protein family member B3 (NPIPB3) from Homo sapiens (Human).